Reading from the N-terminus, the 139-residue chain is Hydrogenase maturation factor HypA (139 aa).

Histidine 2 contributes to the Ni(2+) binding site. Zn(2+)-binding residues include cysteine 73, cysteine 76, cysteine 110, and cysteine 113.

It belongs to the HypA/HybF family.

In terms of biological role, involved in the maturation of [NiFe] hydrogenases. Required for nickel insertion into the metal center of the hydrogenase. The polypeptide is Hydrogenase maturation factor HypA (Thermococcus onnurineus (strain NA1)).